Reading from the N-terminus, the 189-residue chain is Pyridoxal 5'-phosphate synthase subunit PdxT (189 aa).

Residue 47-49 (GES) participates in L-glutamine binding. Cys79 (nucleophile) is an active-site residue. L-glutamine is bound by residues Arg106 and 135 to 136 (IR). Residues His171 and Glu173 each act as charge relay system in the active site.

It belongs to the glutaminase PdxT/SNO family. In the presence of PdxS, forms a dodecamer of heterodimers. Only shows activity in the heterodimer.

It carries out the reaction aldehydo-D-ribose 5-phosphate + D-glyceraldehyde 3-phosphate + L-glutamine = pyridoxal 5'-phosphate + L-glutamate + phosphate + 3 H2O + H(+). The catalysed reaction is L-glutamine + H2O = L-glutamate + NH4(+). Its pathway is cofactor biosynthesis; pyridoxal 5'-phosphate biosynthesis. Catalyzes the hydrolysis of glutamine to glutamate and ammonia as part of the biosynthesis of pyridoxal 5'-phosphate. The resulting ammonia molecule is channeled to the active site of PdxS. In Thermoanaerobacter pseudethanolicus (strain ATCC 33223 / 39E) (Clostridium thermohydrosulfuricum), this protein is Pyridoxal 5'-phosphate synthase subunit PdxT.